Reading from the N-terminus, the 284-residue chain is Pseudouridine-5'-phosphate glycosidase (284 aa).

Glutamate 17 functions as the Proton donor in the catalytic mechanism. Lysine 77 and valine 97 together coordinate substrate. Aspartate 126 contributes to the Mn(2+) binding site. A substrate-binding site is contributed by serine 128–aspartate 130. The active-site Nucleophile is the lysine 147.

The protein belongs to the pseudouridine-5'-phosphate glycosidase family. In terms of assembly, homotrimer. The cofactor is Mn(2+).

It catalyses the reaction D-ribose 5-phosphate + uracil = psi-UMP + H2O. Its function is as follows. Catalyzes the reversible cleavage of pseudouridine 5'-phosphate (PsiMP) to ribose 5-phosphate and uracil. Functions biologically in the cleavage direction, as part of a pseudouridine degradation pathway. This Thermotoga neapolitana (strain ATCC 49049 / DSM 4359 / NBRC 107923 / NS-E) protein is Pseudouridine-5'-phosphate glycosidase.